We begin with the raw amino-acid sequence, 514 residues long: Adenylosuccinate synthetase 1, chloroplastic (514 aa).

Residues 1-73 (MAMAAAAAVA…AQAIERESVK (73 aa)) constitute a chloroplast transit peptide. Residues 100–106 (GDEGKGK) and 128–130 (GHT) each bind GTP. Catalysis depends on Asp101, which acts as the Proton acceptor. Positions 101 and 128 each coordinate Mg(2+). IMP is bound by residues 101 to 104 (DEGK), 126 to 129 (NAGH), Thr218, Arg232, Gln312, Thr327, and Arg391. The Proton donor role is filled by His129. 387–393 (TTTGRPR) lines the substrate pocket. Residues Arg393, 419–421 (KLD), and 502–504 (GVG) contribute to the GTP site.

Belongs to the adenylosuccinate synthetase family. As to quaternary structure, homodimer. It depends on Mg(2+) as a cofactor.

Its subcellular location is the plastid. It localises to the chloroplast. It carries out the reaction IMP + L-aspartate + GTP = N(6)-(1,2-dicarboxyethyl)-AMP + GDP + phosphate + 2 H(+). Its pathway is purine metabolism; AMP biosynthesis via de novo pathway; AMP from IMP: step 1/2. In terms of biological role, plays an important role in the de novo pathway and in the salvage pathway of purine nucleotide biosynthesis. Catalyzes the first committed step in the biosynthesis of AMP from IMP. The sequence is that of Adenylosuccinate synthetase 1, chloroplastic from Physcomitrium patens (Spreading-leaved earth moss).